The sequence spans 144 residues: Cysteine-rich tail protein 1 (144 aa).

The tract at residues 51–105 is disordered; sequence APEPTHLLQPTEVPGPKGAKGNQGAAPIQNQQAWQQPGNPYSSSQRQAGLTYAGP. Positions 78 to 98 are enriched in polar residues; that stretch reads IQNQQAWQQPGNPYSSSQRQA.

Belongs to the CYSRT1 family. In terms of assembly, interacts with LCE1B; the interaction is direct. Interacts with LCE2C; the interaction is direct. Interacts with LCE3A; the interaction is direct. Interacts with LCE3C; the interaction is direct. Interacts with LCE4A; the interaction is direct. Interacts with LCE5A; the interaction is direct. Interacts with LCE1C. Interacts with LCE1D. Interacts with LCE1E. Interacts with LCE2A. Interacts with LCE3D. Interacts with LCE3E. Interacts with LCE1A. Expressed in the stratum granulosum, in skin and oral epithelia (at protein level).

It is found in the cornified envelope. Component of the stratum corneum that may contribute to epidermal antimicrobial host defenses. The polypeptide is Cysteine-rich tail protein 1 (CYSRT1) (Homo sapiens (Human)).